The following is a 422-amino-acid chain: Enolase (422 aa).

Gln162 is a (2R)-2-phosphoglycerate binding site. Glu204 (proton donor) is an active-site residue. Residues Asp241, Glu285, and Asp312 each coordinate Mg(2+). (2R)-2-phosphoglycerate-binding residues include Lys337, Arg366, Ser367, and Lys388. Catalysis depends on Lys337, which acts as the Proton acceptor.

It belongs to the enolase family. Mg(2+) is required as a cofactor.

Its subcellular location is the cytoplasm. The protein localises to the secreted. The protein resides in the cell surface. The enzyme catalyses (2R)-2-phosphoglycerate = phosphoenolpyruvate + H2O. It participates in carbohydrate degradation; glycolysis; pyruvate from D-glyceraldehyde 3-phosphate: step 4/5. Functionally, catalyzes the reversible conversion of 2-phosphoglycerate (2-PG) into phosphoenolpyruvate (PEP). It is essential for the degradation of carbohydrates via glycolysis. This Wolinella succinogenes (strain ATCC 29543 / DSM 1740 / CCUG 13145 / JCM 31913 / LMG 7466 / NCTC 11488 / FDC 602W) (Vibrio succinogenes) protein is Enolase.